The primary structure comprises 735 residues: Phosphoribosylformylglycinamidine synthase subunit PurL (735 aa).

Residue His50 is part of the active site. Residues Tyr53 and Lys92 each contribute to the ATP site. Residue Glu94 coordinates Mg(2+). Residues 95 to 98 and Arg117 contribute to the substrate site; that span reads SHNH. His96 serves as the catalytic Proton acceptor. Mg(2+) is bound at residue Asp118. Gln241 is a binding site for substrate. A Mg(2+)-binding site is contributed by Asp269. Residue 313 to 315 participates in substrate binding; sequence ESQ. ATP contacts are provided by Asp495 and Gly532. Asn533 serves as a coordination point for Mg(2+). Ser535 contacts substrate.

This sequence belongs to the FGAMS family. As to quaternary structure, monomer. Part of the FGAM synthase complex composed of 1 PurL, 1 PurQ and 2 PurS subunits.

It localises to the cytoplasm. It carries out the reaction N(2)-formyl-N(1)-(5-phospho-beta-D-ribosyl)glycinamide + L-glutamine + ATP + H2O = 2-formamido-N(1)-(5-O-phospho-beta-D-ribosyl)acetamidine + L-glutamate + ADP + phosphate + H(+). Its pathway is purine metabolism; IMP biosynthesis via de novo pathway; 5-amino-1-(5-phospho-D-ribosyl)imidazole from N(2)-formyl-N(1)-(5-phospho-D-ribosyl)glycinamide: step 1/2. Functionally, part of the phosphoribosylformylglycinamidine synthase complex involved in the purines biosynthetic pathway. Catalyzes the ATP-dependent conversion of formylglycinamide ribonucleotide (FGAR) and glutamine to yield formylglycinamidine ribonucleotide (FGAM) and glutamate. The FGAM synthase complex is composed of three subunits. PurQ produces an ammonia molecule by converting glutamine to glutamate. PurL transfers the ammonia molecule to FGAR to form FGAM in an ATP-dependent manner. PurS interacts with PurQ and PurL and is thought to assist in the transfer of the ammonia molecule from PurQ to PurL. This Bartonella henselae (strain ATCC 49882 / DSM 28221 / CCUG 30454 / Houston 1) (Rochalimaea henselae) protein is Phosphoribosylformylglycinamidine synthase subunit PurL.